A 180-amino-acid polypeptide reads, in one-letter code: Large ribosomal subunit protein uL6 (180 aa).

The protein belongs to the universal ribosomal protein uL6 family. Part of the 50S ribosomal subunit.

Its function is as follows. This protein binds to the 23S rRNA, and is important in its secondary structure. It is located near the subunit interface in the base of the L7/L12 stalk, and near the tRNA binding site of the peptidyltransferase center. The sequence is that of Large ribosomal subunit protein uL6 from Clostridium tetani (strain Massachusetts / E88).